The following is a 465-amino-acid chain: Methylenetetrahydrofolate--tRNA-(uracil-5-)-methyltransferase TrmFO (465 aa).

Residue Gly10 to Gly15 coordinates FAD.

Belongs to the MnmG family. TrmFO subfamily. FAD is required as a cofactor.

It localises to the cytoplasm. It carries out the reaction uridine(54) in tRNA + (6R)-5,10-methylene-5,6,7,8-tetrahydrofolate + NADH + H(+) = 5-methyluridine(54) in tRNA + (6S)-5,6,7,8-tetrahydrofolate + NAD(+). It catalyses the reaction uridine(54) in tRNA + (6R)-5,10-methylene-5,6,7,8-tetrahydrofolate + NADPH + H(+) = 5-methyluridine(54) in tRNA + (6S)-5,6,7,8-tetrahydrofolate + NADP(+). In terms of biological role, catalyzes the folate-dependent formation of 5-methyl-uridine at position 54 (M-5-U54) in all tRNAs. This Deinococcus radiodurans (strain ATCC 13939 / DSM 20539 / JCM 16871 / CCUG 27074 / LMG 4051 / NBRC 15346 / NCIMB 9279 / VKM B-1422 / R1) protein is Methylenetetrahydrofolate--tRNA-(uracil-5-)-methyltransferase TrmFO.